The following is a 166-amino-acid chain: UPF0336 protein MT0525.1 (166 aa).

Residues 8–131 (QTLIGKHYRA…VLAEIRSEVT (124 aa)) enclose the MaoC-like domain.

The protein belongs to the UPF0336 family.

The protein is UPF0336 protein MT0525.1 of Mycobacterium tuberculosis (strain CDC 1551 / Oshkosh).